The following is a 527-amino-acid chain: GMP synthase [glutamine-hydrolyzing] (527 aa).

The region spanning Lys-4 to Asp-202 is the Glutamine amidotransferase type-1 domain. Cys-81 acts as the Nucleophile in catalysis. Catalysis depends on residues His-176 and Glu-178. The GMPS ATP-PPase domain occupies Trp-203 to Arg-395. An ATP-binding site is contributed by Ser-230–Ser-236.

As to quaternary structure, homodimer.

It carries out the reaction XMP + L-glutamine + ATP + H2O = GMP + L-glutamate + AMP + diphosphate + 2 H(+). Its pathway is purine metabolism; GMP biosynthesis; GMP from XMP (L-Gln route): step 1/1. Functionally, catalyzes the synthesis of GMP from XMP. The protein is GMP synthase [glutamine-hydrolyzing] of Paraburkholderia phymatum (strain DSM 17167 / CIP 108236 / LMG 21445 / STM815) (Burkholderia phymatum).